The sequence spans 407 residues: Amylovoran biosynthesis glycosyltransferase AmsK (407 aa).

Belongs to the glycosyltransferase group 1 family. Glycosyltransferase 4 subfamily.

It participates in glycan metabolism; exopolysaccharide biosynthesis. Functionally, involved in the biosynthesis of amylovoran which functions as a virulence factor. In Erwinia amylovora (Fire blight bacteria), this protein is Amylovoran biosynthesis glycosyltransferase AmsK (amsK).